The following is a 349-amino-acid chain: Uroporphyrinogen decarboxylase (349 aa).

Residues 23–27, aspartate 71, tyrosine 148, serine 203, and histidine 317 each bind substrate; that span reads RQAGR.

It belongs to the uroporphyrinogen decarboxylase family. Homodimer.

It localises to the cytoplasm. It catalyses the reaction uroporphyrinogen III + 4 H(+) = coproporphyrinogen III + 4 CO2. Its pathway is porphyrin-containing compound metabolism; protoporphyrin-IX biosynthesis; coproporphyrinogen-III from 5-aminolevulinate: step 4/4. Functionally, catalyzes the decarboxylation of four acetate groups of uroporphyrinogen-III to yield coproporphyrinogen-III. This Sorangium cellulosum (strain So ce56) (Polyangium cellulosum (strain So ce56)) protein is Uroporphyrinogen decarboxylase.